Here is a 531-residue protein sequence, read N- to C-terminus: Sterol 26-hydroxylase, mitochondrial (531 aa).

The transit peptide at 1–33 (MAALGCARLRWALRGAGRGLCPHGARAKAAIPA) directs the protein to the mitochondrion. Lys283 is subject to N6-acetyllysine. Residues 384-398 (PLLKAVLKETLRLYP) are sterol-binding. Heme is bound at residue Cys476. Residues Lys509 and Lys520 each carry the N6-acetyllysine modification.

Belongs to the cytochrome P450 family. In terms of assembly, interacts with HSP70; this interaction is required for initial targeting to mitochondria. Heme is required as a cofactor. As to expression, expressed in the neural retina and underlying retinal pigment epithelium (at protein level). Expressed in the gray and white matter of cerebellum (at protein level).

The protein resides in the mitochondrion inner membrane. It catalyses the reaction 5beta-cholestane-3alpha,7alpha,12alpha-triol + 6 reduced [adrenodoxin] + 3 O2 + 5 H(+) = (25R)-3alpha,7alpha,12alpha-trihydroxy-5beta-cholestan-26-oate + 6 oxidized [adrenodoxin] + 4 H2O. The enzyme catalyses cholestanol + 2 reduced [adrenodoxin] + O2 + 2 H(+) = (25R)-26-hydroxycholestanol + 2 oxidized [adrenodoxin] + H2O. It carries out the reaction (25R)-3beta-hydroxycholest-5-en-7-one-26-al + 2 reduced [adrenodoxin] + O2 + H(+) = (25R)-3beta-hydroxycholest-5-en-7-one-26-oate + 2 oxidized [adrenodoxin] + H2O. The catalysed reaction is (25R)-3beta,26-dihydroxycholest-5-en-7-one + 2 reduced [adrenodoxin] + O2 + 2 H(+) = (25R)-3beta-hydroxycholest-5-en-7-one-26-al + 2 oxidized [adrenodoxin] + 2 H2O. It catalyses the reaction 7-oxocholesterol + 2 reduced [adrenodoxin] + O2 + 2 H(+) = (25R)-3beta,26-dihydroxycholest-5-en-7-one + 2 oxidized [adrenodoxin] + H2O. The enzyme catalyses calciol + 2 reduced [adrenodoxin] + O2 + 2 H(+) = calcidiol + 2 oxidized [adrenodoxin] + H2O. It carries out the reaction (25R)-5beta-cholestane-3alpha,7alpha,12alpha,26-tetrol + 2 reduced [adrenodoxin] + O2 + 2 H(+) = (25R)-3alpha,7alpha,12alpha-trihydroxy-5beta-cholestan-26-al + 2 oxidized [adrenodoxin] + 2 H2O. The catalysed reaction is 2 reduced [adrenodoxin] + cholesterol + O2 + 2 H(+) = (25R)-cholest-5-ene-3beta,26-diol + 2 oxidized [adrenodoxin] + H2O. It catalyses the reaction (25R)-3beta,4beta-dihydroxycholest-5-en-26-al + 2 reduced [adrenodoxin] + O2 + H(+) = (25R)-3beta,4beta-dihydroxycholest-5-en-26-oate + 2 oxidized [adrenodoxin] + H2O. The enzyme catalyses (25R)-4beta,26-dihydroxycholesterol + 2 reduced [adrenodoxin] + O2 + 2 H(+) = (25R)-3beta,4beta-dihydroxycholest-5-en-26-al + 2 oxidized [adrenodoxin] + 2 H2O. It carries out the reaction 4beta-hydroxycholesterol + 2 reduced [adrenodoxin] + O2 + 2 H(+) = (25R)-4beta,26-dihydroxycholesterol + 2 oxidized [adrenodoxin] + H2O. The catalysed reaction is (25R)-3beta-hydroxy-5-cholesten-26-al + 2 reduced [adrenodoxin] + O2 + H(+) = (25R)-3beta-hydroxy-5-cholestenoate + 2 oxidized [adrenodoxin] + H2O. It catalyses the reaction (25R)-cholest-5-ene-3beta,26-diol + 2 reduced [adrenodoxin] + O2 + 2 H(+) = (25R)-3beta-hydroxy-5-cholesten-26-al + 2 oxidized [adrenodoxin] + 2 H2O. The enzyme catalyses (25R)-3alpha,7alpha,12alpha-trihydroxy-5beta-cholestan-26-al + 2 reduced [adrenodoxin] + O2 + H(+) = (25R)-3alpha,7alpha,12alpha-trihydroxy-5beta-cholestan-26-oate + 2 oxidized [adrenodoxin] + H2O. It carries out the reaction 5beta-cholestane-3alpha,7alpha,12alpha-triol + 2 reduced [adrenodoxin] + O2 + 2 H(+) = (25R)-5beta-cholestane-3alpha,7alpha,12alpha,26-tetrol + 2 oxidized [adrenodoxin] + H2O. It functions in the pathway hormone biosynthesis; cholecalciferol biosynthesis. Its pathway is steroid metabolism; cholesterol degradation. It participates in lipid metabolism; bile acid biosynthesis. In terms of biological role, cytochrome P450 monooxygenase that catalyzes regio- and stereospecific hydroxylation of cholesterol and its derivatives. Hydroxylates (with R stereochemistry) the terminal methyl group of cholesterol side-chain in a three step reaction to yield at first a C26 alcohol, then a C26 aldehyde and finally a C26 acid. Regulates cholesterol homeostasis by catalyzing the conversion of excess cholesterol to bile acids via both the 'neutral' (classic) and the 'acid' (alternative) pathways. May also regulate cholesterol homeostasis via generation of active oxysterols, which act as ligands for NR1H2 and NR1H3 nuclear receptors, modulating the transcription of genes involved in lipid metabolism. Plays a role in cholestanol metabolism in the cerebellum. Similarly to cholesterol, hydroxylates cholestanol and may facilitate sterol diffusion through the blood-brain barrier to the systemic circulation for further degradation. Also hydroxylates retinal 7-ketocholesterol, a noxious oxysterol with pro-inflammatory and pro-apoptotic effects, and may play a role in its elimination from the retinal pigment epithelium. May play a redundant role in vitamin D biosynthesis. Catalyzes 25-hydroxylation of vitamin D3 that is required for its conversion to a functionally active form. This is Sterol 26-hydroxylase, mitochondrial from Homo sapiens (Human).